The following is an 83-amino-acid chain: Cytochrome b559 subunit alpha (83 aa).

The helical transmembrane segment at 21–35 (VIHSITIPSLFIAGW) threads the bilayer. Histidine 23 is a heme binding site.

Belongs to the PsbE/PsbF family. As to quaternary structure, heterodimer of an alpha subunit and a beta subunit. PSII is composed of 1 copy each of membrane proteins PsbA, PsbB, PsbC, PsbD, PsbE, PsbF, PsbH, PsbI, PsbJ, PsbK, PsbL, PsbM, PsbT, PsbX, PsbY, PsbZ, Psb30/Ycf12, at least 3 peripheral proteins of the oxygen-evolving complex and a large number of cofactors. It forms dimeric complexes. Heme b is required as a cofactor.

Its subcellular location is the plastid. It is found in the chloroplast thylakoid membrane. Functionally, this b-type cytochrome is tightly associated with the reaction center of photosystem II (PSII). PSII is a light-driven water:plastoquinone oxidoreductase that uses light energy to abstract electrons from H(2)O, generating O(2) and a proton gradient subsequently used for ATP formation. It consists of a core antenna complex that captures photons, and an electron transfer chain that converts photonic excitation into a charge separation. In Chaetosphaeridium globosum (Charophycean green alga), this protein is Cytochrome b559 subunit alpha.